A 638-amino-acid chain; its full sequence is Glucans biosynthesis glucosyltransferase H (638 aa).

6 helical membrane passes run 60–82 (FYLI…AVMW), 97–119 (FMFL…FCVV), 415–437 (IGHY…IPLV), 464–486 (LWIF…FALL), 499–521 (LRVL…VVMY), and 578–600 (LAMW…ALTS).

Belongs to the glycosyltransferase 2 family. OpgH subfamily.

It is found in the cell inner membrane. Its pathway is glycan metabolism; osmoregulated periplasmic glucan (OPG) biosynthesis. Its function is as follows. Involved in the biosynthesis of osmoregulated periplasmic glucans (OPGs). This Xylella fastidiosa (strain 9a5c) protein is Glucans biosynthesis glucosyltransferase H.